The following is a 286-amino-acid chain: ATP synthase gamma chain (286 aa).

This sequence belongs to the ATPase gamma chain family. F-type ATPases have 2 components, CF(1) - the catalytic core - and CF(0) - the membrane proton channel. CF(1) has five subunits: alpha(3), beta(3), gamma(1), delta(1), epsilon(1). CF(0) has three main subunits: a, b and c.

It localises to the cell inner membrane. Produces ATP from ADP in the presence of a proton gradient across the membrane. The gamma chain is believed to be important in regulating ATPase activity and the flow of protons through the CF(0) complex. The chain is ATP synthase gamma chain from Pseudomonas savastanoi pv. phaseolicola (strain 1448A / Race 6) (Pseudomonas syringae pv. phaseolicola (strain 1448A / Race 6)).